Here is a 95-residue protein sequence, read N- to C-terminus: MNEERLFKILLAPHISEKGALTTGQYVFEVMPDATKPEIKRAVEKQFNVTVKSVRTCNVKGKTTRFRQVRGRRKNWKKAYVMLAPGSEIDIAAGE.

The protein belongs to the universal ribosomal protein uL23 family. Part of the 50S ribosomal subunit. Contacts protein L29, and trigger factor when it is bound to the ribosome.

In terms of biological role, one of the early assembly proteins it binds 23S rRNA. One of the proteins that surrounds the polypeptide exit tunnel on the outside of the ribosome. Forms the main docking site for trigger factor binding to the ribosome. This Coxiella burnetii (strain CbuK_Q154) (Coxiella burnetii (strain Q154)) protein is Large ribosomal subunit protein uL23.